The chain runs to 324 residues: tRNA pseudouridine synthase B (324 aa).

D49 (nucleophile) is an active-site residue.

It belongs to the pseudouridine synthase TruB family. Type 1 subfamily.

It carries out the reaction uridine(55) in tRNA = pseudouridine(55) in tRNA. In terms of biological role, responsible for synthesis of pseudouridine from uracil-55 in the psi GC loop of transfer RNAs. This chain is tRNA pseudouridine synthase B, found in Tolumonas auensis (strain DSM 9187 / NBRC 110442 / TA 4).